The following is a 332-amino-acid chain: D-alanine--D-alanine ligase (332 aa).

Positions 1–17 are enriched in polar residues; the sequence is MPMTMTQSATNPTATPV. The interval 1 to 28 is disordered; the sequence is MPMTMTQSATNPTATPVSANKASANAAT. The segment covering 18–28 has biased composition (low complexity); the sequence is SANKASANAAT. Residues 132-329 enclose the ATP-grasp domain; the sequence is KQLWHGCGLS…FEQLCWHILA (198 aa). 158–213 is a binding site for ATP; it reads VNTLGLPLIVKPVHEGSSIGMSKVNTLDELPKAYEVAAGCGDVVMAEKWITGREFT. Mg(2+) contacts are provided by aspartate 283, glutamate 296, and asparagine 298.

This sequence belongs to the D-alanine--D-alanine ligase family. Mg(2+) serves as cofactor. Mn(2+) is required as a cofactor.

It is found in the cytoplasm. The enzyme catalyses 2 D-alanine + ATP = D-alanyl-D-alanine + ADP + phosphate + H(+). It participates in cell wall biogenesis; peptidoglycan biosynthesis. Its function is as follows. Cell wall formation. The polypeptide is D-alanine--D-alanine ligase (Psychrobacter sp. (strain PRwf-1)).